Here is a 160-residue protein sequence, read N- to C-terminus: Small ribosomal subunit protein uS7 (160 aa).

The protein belongs to the universal ribosomal protein uS7 family. In terms of assembly, part of the 30S ribosomal subunit. Contacts proteins S9 and S11.

Functionally, one of the primary rRNA binding proteins, it binds directly to 16S rRNA where it nucleates assembly of the head domain of the 30S subunit. Is located at the subunit interface close to the decoding center, probably blocks exit of the E-site tRNA. The sequence is that of Small ribosomal subunit protein uS7 from Ehrlichia ruminantium (strain Gardel).